Consider the following 80-residue polypeptide: MKTANKQTKLHVRKNDTVVVIAGNDKGKTGKVLKAYPQACRVIVEGVNIRKRHVRPSQSHPQGAIIEREFPIHASNVKKG.

The protein belongs to the universal ribosomal protein uL24 family. In terms of assembly, part of the 50S ribosomal subunit.

One of two assembly initiator proteins, it binds directly to the 5'-end of the 23S rRNA, where it nucleates assembly of the 50S subunit. In terms of biological role, one of the proteins that surrounds the polypeptide exit tunnel on the outside of the subunit. This chain is Large ribosomal subunit protein uL24, found in Prosthecochloris aestuarii (strain DSM 271 / SK 413).